The chain runs to 140 residues: Large-conductance mechanosensitive channel (140 aa).

3 consecutive transmembrane segments (helical) span residues 14–34 (VLDLAVGVIIGGAFTSIVKSL), 37–57 (YLINPLIGLFIGGIDFSDWVL), and 66–86 (FGSFINAVINFLIIAFVVFIL).

It belongs to the MscL family. As to quaternary structure, homopentamer.

The protein localises to the cell membrane. Its function is as follows. Channel that opens in response to stretch forces in the membrane lipid bilayer. May participate in the regulation of osmotic pressure changes within the cell. In Pediococcus pentosaceus (strain ATCC 25745 / CCUG 21536 / LMG 10740 / 183-1w), this protein is Large-conductance mechanosensitive channel.